The primary structure comprises 160 residues: MLVLLAGLFVVHIATAIMLFVSTIANVWMVADGIDSSIGLWKNCTSGSCDGSLSYGNDDAIKAVQAFMILSIIFSIISLVVFVFQLFTMEKGNRFFLSGSTMLVCWLCILIGVSIYTHHYAHSEGNFFPSSHQGYCFILTWICFCFSFIIGILYMVLRKK.

The helical transmembrane segment at 1–21 threads the bilayer; the sequence is MLVLLAGLFVVHIATAIMLFV. Asparagine 43 carries an N-linked (GlcNAc...) asparagine glycan. A run of 3 helical transmembrane segments spans residues 67 to 87, 95 to 115, and 137 to 157; these read FMIL…FQLF, FFLS…GVSI, and FILT…YMVL.

It belongs to the PMP-22/EMP/MP20 family. Most prominently found in the gastrointestinal tract, skin, lung, and brain but not in liver.

It is found in the membrane. This is Epithelial membrane protein 1 (Emp1) from Rattus norvegicus (Rat).